The following is a 955-amino-acid chain: UPF0182 protein syc2310_c (955 aa).

9 helical membrane-spanning segments follow: residues 12–32 (IAAI…TLWF), 45–65 (LAVQ…LIGG), 85–105 (LQLG…LALT), 141–161 (GSWP…LFLW), 163–183 (PWPL…LLTS), 224–244 (FDLW…YYLA), 263–283 (HLVR…WLAQ), 306–326 (LPLL…LFWQ), and 343–363 (AAIA…QLVV).

Belongs to the UPF0182 family.

It is found in the cell membrane. In Synechococcus sp. (strain ATCC 27144 / PCC 6301 / SAUG 1402/1) (Anacystis nidulans), this protein is UPF0182 protein syc2310_c.